A 312-amino-acid polypeptide reads, in one-letter code: Ribosomal RNA small subunit methyltransferase H (312 aa).

S-adenosyl-L-methionine-binding positions include 32–34 (AGH), aspartate 51, phenylalanine 78, aspartate 99, and glutamine 106.

This sequence belongs to the methyltransferase superfamily. RsmH family.

The protein resides in the cytoplasm. It catalyses the reaction cytidine(1402) in 16S rRNA + S-adenosyl-L-methionine = N(4)-methylcytidine(1402) in 16S rRNA + S-adenosyl-L-homocysteine + H(+). Its function is as follows. Specifically methylates the N4 position of cytidine in position 1402 (C1402) of 16S rRNA. This is Ribosomal RNA small subunit methyltransferase H from Exiguobacterium sibiricum (strain DSM 17290 / CCUG 55495 / CIP 109462 / JCM 13490 / 255-15).